The following is a 133-amino-acid chain: Interleukin-5 (133 aa).

The signal sequence occupies residues 1–20 (MRRMLLHLSVLTLSCVWATA). Residues N46, N75, and N89 are each glycosylated (N-linked (GlcNAc...) asparagine).

This sequence belongs to the IL-5 family. In terms of assembly, homodimer; disulfide-linked. Interacts with IL5RA. Interacts with CSF2RB. Expressed in lymphoid cells, including spleen, thymus, lymph nodes and peripheral blood mononuclear cells.

It is found in the secreted. In terms of biological role, homodimeric cytokine expressed predominantly by T-lymphocytes and NK cells that plays an important role in the survival, differentiation, and chemotaxis of eosinophils. Also acts on activated and resting B-cells to induce immunoglobulin production, growth, and differentiation. Mechanistically, exerts its biological effects through a receptor composed of IL5RA subunit and the cytokine receptor common subunit beta/CSF2RB. Binding to the receptor leads to activation of various kinases including LYN, SYK and JAK2 and thereby propagates signals through the RAS-MAPK and JAK-STAT5 pathways respectively. The chain is Interleukin-5 (Il5) from Mus musculus (Mouse).